A 113-amino-acid polypeptide reads, in one-letter code: Large ribosomal subunit protein uL22 (113 aa).

Belongs to the universal ribosomal protein uL22 family. Part of the 50S ribosomal subunit.

Functionally, this protein binds specifically to 23S rRNA; its binding is stimulated by other ribosomal proteins, e.g. L4, L17, and L20. It is important during the early stages of 50S assembly. It makes multiple contacts with different domains of the 23S rRNA in the assembled 50S subunit and ribosome. The globular domain of the protein is located near the polypeptide exit tunnel on the outside of the subunit, while an extended beta-hairpin is found that lines the wall of the exit tunnel in the center of the 70S ribosome. This chain is Large ribosomal subunit protein uL22, found in Desulforudis audaxviator (strain MP104C).